Consider the following 756-residue polypeptide: Sodium/hydrogen exchanger 8 (756 aa).

Residues 1 to 31 (MTSIIGAALPYKSPEKAIASSSYSAENDSSP) lie on the Extracellular side of the membrane. Asn-27 is a glycosylation site (N-linked (GlcNAc...) asparagine). Residues 32-52 (VDAVIFAGTSLVLGTACRYLF) traverse the membrane as a helical segment. Residues 53–56 (NGTR) are Cytoplasmic-facing. A helical membrane pass occupies residues 57–77 (VPYTVVLLVIGIFLGSLEYGT). Residues 78-89 (KHNLGKLGHGIR) are Extracellular-facing. A helical membrane pass occupies residues 90–110 (IWNGINPDLLLAVFLPVLLFE). The Cytoplasmic portion of the chain corresponds to 111–125 (SSFSMDVHQIKRCMG). A helical membrane pass occupies residues 126–146 (QMVLLAGPGVLISTFCLGALI). The Extracellular portion of the chain corresponds to 147-157 (KLTFPYNWDWK). The helical transmembrane segment at 158-178 (TSLLLGGLLGATDPVAVVALL) threads the bilayer. The Cytoplasmic portion of the chain corresponds to 179 to 194 (KELGASKKMTTLIDGE). Residues 195–215 (SLMNDGVSVVVFQLFFKMVMG) form a helical membrane-spanning segment. Residues 216–225 (HNSDWGSIIK) are Extracellular-facing. Residues 226–248 (FLVQNSFGAVGIGLAFGIASVFW) traverse the membrane as a helical segment. Over 249 to 251 (LKF) the chain is Cytoplasmic. Residues 252–271 (IFNDTVAQITVTLSASYFAY) form a helical membrane-spanning segment. Residues 272–276 (YTAQE) lie on the Extracellular side of the membrane. A helical membrane pass occupies residues 277-297 (WAGVSGILTVMILGMFFAAFA). The Cytoplasmic segment spans residues 298-311 (RTAFKGDSHQSLHH). Residues 312-332 (FWEMAAYIANTLVFMLSGVII) form a helical membrane-spanning segment. At 333 to 350 (AESVLSGQTISYKGNSWS) the chain is on the extracellular side. The chain crosses the membrane as a helical span at residues 351 to 371 (FLFLLYLYVQLSRCVVVGVLY). Topologically, residues 372–385 (PLLCRSGYGLDWKE) are cytoplasmic. Residues 386-406 (SIILTWSGLRGAVSLSLALSV) form a helical membrane-spanning segment. Over 407-422 (KQSSGNSYLSSDTGTR) the chain is Extracellular. A helical transmembrane segment spans residues 423-443 (FLFLTGGIVFLTLVVNGSTTQ). At 444-756 (LLLHLLRMDT…RSLAIGETDA (313 aa)) the chain is on the cytoplasmic side.

The protein belongs to the monovalent cation:proton antiporter 1 (CPA1) transporter (TC 2.A.36) family.

It localises to the cell membrane. The catalysed reaction is Na(+)(in) + H(+)(out) = Na(+)(out) + H(+)(in). It carries out the reaction K(+)(in) + H(+)(out) = K(+)(out) + H(+)(in). In terms of biological role, may act in low affinity electroneutral exchange of protons for cations such as Na(+) or K(+) across membranes. May also exchange Li(+) and Cs(+) with a lower affinity. The polypeptide is Sodium/hydrogen exchanger 8 (NHX8) (Arabidopsis thaliana (Mouse-ear cress)).